The following is a 675-amino-acid chain: Secretogranin-1 (675 aa).

Positions 1–20 (MQRAMLLGLLGAAALAAVIS) are cleaved as a signal peptide. A disulfide bridge connects residues cysteine 36 and cysteine 57. The segment covering 64–90 (SGKEVKGEEKGENENSKFEVRLLRDPS) has biased composition (basic and acidic residues). Disordered stretches follow at residues 64 to 507 (SGKE…YPTT) and 528 to 555 (NSDF…VTMT). Residues serine 93, serine 99, serine 100, serine 129, and serine 147 each carry the phosphoserine modification. Residue serine 93 is glycosylated (O-linked (Xyl...) (chondroitin sulfate) serine). Composition is skewed to basic and acidic residues over residues 148–161 (KEAK…RGGK) and 168–248 (GKIY…KPQE). The residue at position 190 (serine 190) is a Phosphoserine. O-linked (Xyl...) (chondroitin sulfate) serine glycosylation is present at serine 236. A compositionally biased stretch (acidic residues) spans 250–269 (PDQDQSEEESEEGEEGEEGA). 5 positions are modified to phosphoserine: serine 255, serine 259, serine 291, serine 309, and serine 333. Basic and acidic residues predominate over residues 292-311 (YEGRRPLSEERKHAAGESKD). Tyrosine 339 carries the post-translational modification Sulfotyrosine. Basic and acidic residues-rich tracts occupy residues 361 to 410 (GSEE…EGAK) and 429 to 452 (SRQE…DTAK). 4 positions are modified to phosphoserine: serine 362, serine 372, serine 375, and serine 397. A Sulfotyrosine modification is found at tyrosine 469. A phosphoserine mark is found at serine 490, serine 529, and serine 540. Tyrosine 563 is modified (sulfotyrosine). A disordered region spans residues 620 to 646 (DFYDSEEQMGPHQEAEDEKDRADQRVL). Tyrosine 622 is subject to Sulfotyrosine; partial. Serine 624 is modified (phosphoserine). Residues 637–646 (EKDRADQRVL) show a composition bias toward basic and acidic residues. Arginine 674 carries the post-translational modification Arginine amide; in CCB peptide short form.

This sequence belongs to the chromogranin/secretogranin protein family. As to quaternary structure, interacts with ITPR1 in the secretory granules. Post-translationally, extensively processed in glucagonoma tissue by limited proteolysis at conserved basic residues. Alternative processing are seen in different tissues. The proglucagon-converting enzymes present in transformed alpha-cells are likely candidates to be involved in tissue-specific processing. In terms of tissue distribution, expressed in the brain, adrenal medulla and anterior pituitary. In the brain, localized to the hippocampal formation, the endocrine hypothalamus, the olfactory system, and in anatomically distinct structures in the pons-medulla.

It localises to the secreted. Its function is as follows. Secretogranin-1 is a neuroendocrine secretory granule protein, which may be the precursor for other biologically active peptides. The protein is Secretogranin-1 (Chgb) of Rattus norvegicus (Rat).